Reading from the N-terminus, the 780-residue chain is uncharacterized protein (780 aa).

The region spanning 10–80 is the BTB domain; that stretch reads NNNIIKLNIG…MRTGTFTLPY (71 aa).

This is an uncharacterized protein from Dictyostelium discoideum (Social amoeba).